The sequence spans 189 residues: Peptidyl-tRNA hydrolase (189 aa).

A tRNA-binding site is contributed by Tyr14. His19 (proton acceptor) is an active-site residue. Tyr64, Asn66, and Asn112 together coordinate tRNA.

It belongs to the PTH family. In terms of assembly, monomer.

The protein localises to the cytoplasm. It catalyses the reaction an N-acyl-L-alpha-aminoacyl-tRNA + H2O = an N-acyl-L-amino acid + a tRNA + H(+). Hydrolyzes ribosome-free peptidyl-tRNAs (with 1 or more amino acids incorporated), which drop off the ribosome during protein synthesis, or as a result of ribosome stalling. Its function is as follows. Catalyzes the release of premature peptidyl moieties from peptidyl-tRNA molecules trapped in stalled 50S ribosomal subunits, and thus maintains levels of free tRNAs and 50S ribosomes. In Dehalococcoides mccartyi (strain ATCC BAA-2100 / JCM 16839 / KCTC 5957 / BAV1), this protein is Peptidyl-tRNA hydrolase.